The chain runs to 150 residues: Ribonuclease H (150 aa).

In terms of domain architecture, RNase H type-1 spans 1–141 (MKSIEVHTDG…VDVLARNQAT (141 aa)). Residues Asp-9, Glu-47, Asp-69, and Asp-133 each coordinate Mg(2+).

Belongs to the RNase H family. Monomer. Mg(2+) serves as cofactor.

It is found in the cytoplasm. The enzyme catalyses Endonucleolytic cleavage to 5'-phosphomonoester.. Endonuclease that specifically degrades the RNA of RNA-DNA hybrids. This is Ribonuclease H from Xanthomonas oryzae pv. oryzae (strain MAFF 311018).